Here is a 177-residue protein sequence, read N- to C-terminus: Thymidine kinase (177 aa).

Residue Gly11–Ser18 coordinates ATP. The active-site Proton acceptor is the Glu83. Residue Phe113 coordinates substrate. Cys138 and Cys141 together coordinate Zn(2+). A substrate-binding site is contributed by Ile157–Gly161. Zn(2+) contacts are provided by Cys170 and Cys173.

It belongs to the thymidine kinase family.

It carries out the reaction thymidine + ATP = dTMP + ADP + H(+). This Sheeppox virus (strain KS-1) (SPPV) protein is Thymidine kinase (TK).